A 317-amino-acid chain; its full sequence is Transcriptional activator protein med (317 aa).

The first 17 residues, methionine 1–glycine 17, serve as a signal peptide directing secretion. Cysteine 18 is lipidated: N-palmitoyl cysteine. The S-diacylglycerol cysteine moiety is linked to residue cysteine 18.

The protein belongs to the BMP lipoprotein family.

Its subcellular location is the cell membrane. Positive activator of the comK gene. The chain is Transcriptional activator protein med (med) from Bacillus subtilis (strain 168).